We begin with the raw amino-acid sequence, 842 residues long: MPLSYQHFRRILLLDEEAGPLEEELPRLADEDLNRRVAEDLNLQLPNVSIPWTHKVGNFTGLYSSTIPVFNPNWKTPSFPDIHLHQDIINKCEQFVGPLTVNEKRRLNLVMPARFFPIATKYLPLEKGIKPYYPDNVVNHYFQTRHYLHTLWKAGILYKRETTRSASFCGSPYSWEQELHHGAFLDGPSRMGEESFHHQSSGIFSRPPVGSSIQSKHQKSRLGPQSQQRPLDGSQQGRSGSIRAGVHSPTRRPFGVEPSGSRHAKNIASRSASCLHQSAVRKAAYPNHSTFERHSSSGHAVEFHNIPPSSAGSQSKRPVFSCWWLQFRNSEPCSDYCLTHLVNLLEDWGPCTEHGRHHIRIPRTPARVTGGVFLVDKNPHNTAESRLVVDFSQFSRGSSRVSWPKFAVPNLQSLTNLLSSNLSWLSLDVSAAFYHIPLHPAAMPHLLVGSSGLSRYVARLSSNSRIINHQYGTLPNLHDSCSRNLYVSLMLLFKTFGRKLHLYSHPIIMGFRKIPMGVGLSPFLLAQFTSAICSVVRRAFPHCLAFSYMDDVVLGAKSVQHLESLYTSVTNFLLSLGIHLNPNKTKRWGYSLNFMGYVIGSWGSLPQEHIRMKIKDCFRKLPVNRPIDWKVCQRIVGLLGFAAPFTQCGYPALMPLYACIQSKQAFTFSPTYKAFLCKQYLNLYPVARQRSGLCQVFADATPTGWGLAIGHQRMRGTFVAPLPIHTAELLAACFARSRSGAKLIGTDNSVVLSRKYTSFPWLLGCAANWILRGTSFVYVPSALNPADDPSRGRLGIYRPLLRLPFQPTTGRTSLYAVSPSVPSRLPDRVHFASPLHVAWRPP.

Positions 1–177 are terminal protein domain (TP); the sequence is MPLSYQHFRR…FCGSPYSWEQ (177 aa). Positions 178 to 345 are spacer; the sequence is ELHHGAFLDG…YCLTHLVNLL (168 aa). The interval 186–273 is disordered; that stretch reads DGPSRMGEES…AKNIASRSAS (88 aa). Positions 223–239 are enriched in polar residues; sequence GPQSQQRPLDGSQQGRS. Positions 346 to 689 are polymerase/reverse transcriptase domain (RT); sequence EDWGPCTEHG…YLNLYPVARQ (344 aa). The 244-residue stretch at 356–599 folds into the Reverse transcriptase domain; that stretch reads RHHIRIPRTP…YSLNFMGYVI (244 aa). Mg(2+) is bound by residues Asp428, Asp550, and Asp551.

It belongs to the hepadnaviridae P protein family.

It catalyses the reaction DNA(n) + a 2'-deoxyribonucleoside 5'-triphosphate = DNA(n+1) + diphosphate. It carries out the reaction Endonucleolytic cleavage to 5'-phosphomonoester.. Its activity is regulated as follows. Activated by host HSP70 and HSP40 in vitro to be able to bind the epsilon loop of the pgRNA. Because deletion of the RNase H region renders the protein partly chaperone-independent, the chaperones may be needed indirectly to relieve occlusion of the RNA-binding site by this domain. Inhibited by several reverse-transcriptase inhibitors: Lamivudine, Adefovir and Entecavir. Functionally, multifunctional enzyme that converts the viral RNA genome into dsDNA in viral cytoplasmic capsids. This enzyme displays a DNA polymerase activity that can copy either DNA or RNA templates, and a ribonuclease H (RNase H) activity that cleaves the RNA strand of RNA-DNA heteroduplexes in a partially processive 3'- to 5'-endonucleasic mode. Neo-synthesized pregenomic RNA (pgRNA) are encapsidated together with the P protein, and reverse-transcribed inside the nucleocapsid. Initiation of reverse-transcription occurs first by binding the epsilon loop on the pgRNA genome, and is initiated by protein priming, thereby the 5'-end of (-)DNA is covalently linked to P protein. Partial (+)DNA is synthesized from the (-)DNA template and generates the relaxed circular DNA (RC-DNA) genome. After budding and infection, the RC-DNA migrates in the nucleus, and is converted into a plasmid-like covalently closed circular DNA (cccDNA). The activity of P protein does not seem to be necessary for cccDNA generation, and is presumably released from (+)DNA by host nuclear DNA repair machinery. In Homo sapiens (Human), this protein is Protein P.